Reading from the N-terminus, the 603-residue chain is Prostaglandin G/H synthase 2 (603 aa).

Positions 1–17 (MLLPCALLAALLAAGHA) are cleaved as a signal peptide. The EGF-like domain occupies 18-55 (ANPCCSLPCQNRGVCMTTGFDRYECDCTRTGYYGENCT). 4 disulfide bridges follow: C21–C32, C22–C145, C26–C42, and C44–C54. N-linked (GlcNAc...) asparagine glycans are attached at residues N53 and N90. R106 is a binding site for substrate. Residue N130 is glycosylated (N-linked (GlcNAc...) asparagine). Residue H193 is the Proton acceptor of the active site. A substrate-binding site is contributed by Y341. The active-site For cyclooxygenase activity is the Y371. Heme b is bound at residue H374. A disulfide bridge connects residues C555 and C561.

This sequence belongs to the prostaglandin G/H synthase family. In terms of assembly, homodimer. The cofactor is heme b.

The protein localises to the microsome membrane. It localises to the endoplasmic reticulum membrane. The catalysed reaction is (5Z,8Z,11Z,14Z)-eicosatetraenoate + AH2 + 2 O2 = prostaglandin H2 + A + H2O. It catalyses the reaction (9Z,12Z)-octadecadienoate + AH2 + O2 = (9R)-hydroxy-(10E,12Z)-octadecadienoate + A + H2O. It carries out the reaction (9Z,12Z)-octadecadienoate + AH2 + O2 = (9S)-hydroxy-(10E,12Z)-octadecadienoate + A + H2O. The enzyme catalyses (9Z,12Z)-octadecadienoate + AH2 + O2 = (13S)-hydroxy-(9Z,11E)-octadecadienoate + A + H2O. The catalysed reaction is (9Z,12Z)-octadecadienoate + AH2 + O2 = (13R)-hydroxy-(9Z,11E)-octadecadienoate + A + H2O. Its pathway is lipid metabolism; prostaglandin biosynthesis. Functionally, dual cyclooxygenase and peroxidase in the biosynthesis pathway of prostanoids, a class of C20 oxylipins mainly derived from arachidonate ((5Z,8Z,11Z,14Z)-eicosatetraenoate, AA, C20:4(n-6)), with a particular role in the inflammatory response. The cyclooxygenase activity oxygenates AA to the hydroperoxy endoperoxide prostaglandin G2 (PGG2), and the peroxidase activity reduces PGG2 to the hydroxy endoperoxide prostaglandin H2 (PGH2), the precursor of all 2-series prostaglandins and thromboxanes. This complex transformation is initiated by abstraction of hydrogen at carbon 13 (with S-stereochemistry), followed by insertion of molecular O2 to form the endoperoxide bridge between carbon 9 and 11 that defines prostaglandins. The insertion of a second molecule of O2 (bis-oxygenase activity) yields a hydroperoxy group in PGG2 that is then reduced to PGH2 by two electrons. Similarly catalyzes successive cyclooxygenation and peroxidation of dihomo-gamma-linoleate (DGLA, C20:3(n-6)) and eicosapentaenoate (EPA, C20:5(n-3)) to corresponding PGH1 and PGH3, the precursors of 1- and 3-series prostaglandins. In an alternative pathway of prostanoid biosynthesis, converts 2-arachidonoyl lysophopholipids to prostanoid lysophopholipids, which are then hydrolyzed by intracellular phospholipases to release free prostanoids. Metabolizes 2-arachidonoyl glycerol yielding the glyceryl ester of PGH2, a process that can contribute to pain response. Generates lipid mediators from n-3 and n-6 polyunsaturated fatty acids (PUFAs) via a lipoxygenase-type mechanism. Oxygenates PUFAs to hydroperoxy compounds and then reduces them to corresponding alcohols. Plays a role in the generation of resolution phase interaction products (resolvins) during both sterile and infectious inflammation. Metabolizes docosahexaenoate (DHA, C22:6(n-3)) to 17R-HDHA, a precursor of the D-series resolvins (RvDs). As a component of the biosynthetic pathway of E-series resolvins (RvEs), converts eicosapentaenoate (EPA, C20:5(n-3)) primarily to 18S-HEPE that is further metabolized by ALOX5 and LTA4H to generate 18S-RvE1 and 18S-RvE2. In vascular endothelial cells, converts docosapentaenoate (DPA, C22:5(n-3)) to 13R-HDPA, a precursor for 13-series resolvins (RvTs) shown to activate macrophage phagocytosis during bacterial infection. In activated leukocytes, contributes to oxygenation of hydroxyeicosatetraenoates (HETE) to diHETES (5,15-diHETE and 5,11-diHETE). Can also use linoleate (LA, (9Z,12Z)-octadecadienoate, C18:2(n-6)) as substrate and produce hydroxyoctadecadienoates (HODEs) in a regio- and stereospecific manner, being (9R)-HODE ((9R)-hydroxy-(10E,12Z)-octadecadienoate) and (13S)-HODE ((13S)-hydroxy-(9Z,11E)-octadecadienoate) its major products. During neuroinflammation, plays a role in neuronal secretion of specialized preresolving mediators (SPMs) 15R-lipoxin A4 that regulates phagocytic microglia. The protein is Prostaglandin G/H synthase 2 (PTGS2) of Gallus gallus (Chicken).